Here is a 343-residue protein sequence, read N- to C-terminus: S-adenosylmethionine:tRNA ribosyltransferase-isomerase (343 aa).

The protein belongs to the QueA family. In terms of assembly, monomer.

The protein resides in the cytoplasm. The catalysed reaction is 7-aminomethyl-7-carbaguanosine(34) in tRNA + S-adenosyl-L-methionine = epoxyqueuosine(34) in tRNA + adenine + L-methionine + 2 H(+). Its pathway is tRNA modification; tRNA-queuosine biosynthesis. Its function is as follows. Transfers and isomerizes the ribose moiety from AdoMet to the 7-aminomethyl group of 7-deazaguanine (preQ1-tRNA) to give epoxyqueuosine (oQ-tRNA). The chain is S-adenosylmethionine:tRNA ribosyltransferase-isomerase from Natranaerobius thermophilus (strain ATCC BAA-1301 / DSM 18059 / JW/NM-WN-LF).